A 512-amino-acid chain; its full sequence is Gamma-aminobutyric acid receptor subunit beta-2 (512 aa).

The signal sequence occupies residues 1-25 (MWRVRKRGYFGIWSFPLIIAAVCAQ). Over 26–244 (SVNDPSNMSL…SFKLKRNIGY (219 aa)) the chain is Extracellular. Residues Asn-32 and Asn-104 are each glycosylated (N-linked (GlcNAc...) asparagine). Tyr-121 contributes to the histamine binding site. Cys-160 and Cys-174 are disulfide-bonded. N-linked (GlcNAc...) asparagine glycosylation is present at Asn-173. Histamine is bound by residues 180 to 181 (SY) and Thr-226. Tyr-181 and Thr-226 together coordinate 4-aminobutanoate. 3 helical membrane-spanning segments follow: residues 245-266 (FILQ…SFWI), 270-292 (ASAA…NTHL), and 304-326 (AIDM…YALV). The Cytoplasmic portion of the chain corresponds to 327–489 (NYIFFGRGPQ…DLTDVNAIDR (163 aa)). Phosphotyrosine is present on Tyr-441. The helical transmembrane segment at 490–511 (WSRIFFPVVFSFFNIVYWLYYV) threads the bilayer.

Belongs to the ligand-gated ion channel (TC 1.A.9) family. Gamma-aminobutyric acid receptor (TC 1.A.9.5) subfamily. GABRB2 sub-subfamily. Heteropentamer, formed by a combination of alpha (GABRA1-6), beta (GABRB1-3), gamma (GABRG1-3), delta (GABRD), epsilon (GABRE), rho (GABRR1-3), pi (GABRP) and theta (GABRQ) chains, each subunit exhibiting distinct physiological and pharmacological properties. Interacts with UBQLN1. May interact with KIF21B. Identified in a complex of 720 kDa composed of LHFPL4, NLGN2, GABRA1, GABRB2, GABRG2 and GABRB3. Post-translationally, glycosylated.

The protein resides in the postsynaptic cell membrane. It localises to the cell membrane. Its subcellular location is the cytoplasmic vesicle. It carries out the reaction chloride(in) = chloride(out). With respect to regulation, allosterically activated by benzodiazepines and the anesthetic etomidate. Inhibited by the antagonist bicuculline. Potentiated by histamine. Beta subunit of the heteropentameric ligand-gated chloride channel gated by gamma-aminobutyric acid (GABA), a major inhibitory neurotransmitter in the brain. GABA-gated chloride channels, also named GABA(A) receptors (GABAAR), consist of five subunits arranged around a central pore and contain GABA active binding site(s) located at the alpha and beta subunit interface(s). When activated by GABA, GABAARs selectively allow the flow of chloride anions across the cell membrane down their electrochemical gradient. Chloride influx into the postsynaptic neuron following GABAAR opening decreases the neuron ability to generate a new action potential, thereby reducing nerve transmission. GABAARs containing alpha-1 and beta-2 or -3 subunits exhibit synaptogenic activity; the gamma-2 subunit being necessary but not sufficient to induce rapid synaptic contacts formation. Extrasynaptic beta-2 receptors contribute to the tonic GABAergic inhibition. Beta-containing GABAARs can simultaneously bind GABA and histamine where histamine binds at the interface of two neighboring beta subunits, which may be involved in the regulation of sleep and wakefulness. This is Gamma-aminobutyric acid receptor subunit beta-2 from Mus musculus (Mouse).